A 363-amino-acid polypeptide reads, in one-letter code: sn-glycerol-3-phosphate import ATP-binding protein UgpC (363 aa).

An ABC transporter domain is found at 4–235; the sequence is VVLRNVRKTY…PATTFVASFI (232 aa). 37 to 44 contacts ATP; sequence GPSGCGKS.

Belongs to the ABC transporter superfamily. sn-glycerol-3-phosphate importer (TC 3.A.1.1.3) family. In terms of assembly, the complex is composed of two ATP-binding proteins (UgpC), two transmembrane proteins (UgpA and UgpE) and a solute-binding protein (UgpB).

It is found in the cell inner membrane. The enzyme catalyses sn-glycerol 3-phosphate(out) + ATP + H2O = sn-glycerol 3-phosphate(in) + ADP + phosphate + H(+). In terms of biological role, part of the ABC transporter complex UgpBAEC involved in sn-glycerol-3-phosphate (G3P) import. Responsible for energy coupling to the transport system. This chain is sn-glycerol-3-phosphate import ATP-binding protein UgpC, found in Rhodopseudomonas palustris (strain ATCC BAA-98 / CGA009).